The sequence spans 547 residues: Delta-guaiene synthase 1 (547 aa).

Mg(2+)-binding residues include D299, D303, and D444. The DDXXD motif motif lies at 299 to 303 (DDTYD).

Belongs to the terpene synthase family. Mg(2+) is required as a cofactor.

It catalyses the reaction (2E,6E)-farnesyl diphosphate = delta-guaiene + diphosphate. The enzyme catalyses (2E,6E)-farnesyl diphosphate = alpha-guaiene + diphosphate. Its pathway is secondary metabolite biosynthesis; terpenoid biosynthesis. Its function is as follows. Sesquiterpene synthase involved in the biosynthesis of delta-guaiene (81.2%) and alpha-guaiene (18.1%), two structures composed of five- and seven-membered rings. Also produces 0.7% of alpha-humulene. This Aquilaria crassna (Eagle wood) protein is Delta-guaiene synthase 1 (C2).